We begin with the raw amino-acid sequence, 944 residues long: Translation initiation factor IF-2 (944 aa).

Over residues 55–81 (LTGQAAAPAAAPSSAPRPGARSSAPKP) the composition is skewed to low complexity. A disordered region spans residues 55 to 329 (LTGQAAAPAA…RTKRAEFELR (275 aa)). Pro residues predominate over residues 82-92 (GGRPTPGPQPT). A compositionally biased stretch (low complexity) spans 93-107 (AAPEVEAPEASDVPV). Over residues 123-135 (ASRKAAAEEKAQA) the composition is skewed to basic and acidic residues. Low complexity-rich tracts occupy residues 136–153 (EKSA…ETPS) and 211–222 (GQRPAAGAAGPR). The span at 223–236 (PAAPRPGSPRPGAP) shows a compositional bias: pro residues. Residues 244–257 (GARPAGFGQRPAGA) are compositionally biased toward low complexity. Over residues 258 to 269 (GRPGGAPGGAGR) the composition is skewed to gly residues. Residues 270 to 283 (PGAPAAGGFQRPAG) are compositionally biased toward low complexity. Residues 284-310 (GFAGRPGGGGRGRGPGGGTAGAFGRGG) are compositionally biased toward gly residues. A compositionally biased stretch (basic residues) spans 311–322 (GKSKSRKSKRTK). In terms of domain architecture, tr-type G spans 437–611 (IRPPVVTVMG…LTADAGLDLR (175 aa)). The G1 stretch occupies residues 446–453 (GHVDHGKT). 446–453 (GHVDHGKT) lines the GTP pocket. A G2 region spans residues 471–475 (GITQH). Residues 496-499 (DTPG) form a G3 region. GTP-binding positions include 496–500 (DTPGH) and 550–553 (NKVD). The G4 stretch occupies residues 550-553 (NKVD). The G5 stretch occupies residues 586–588 (SAL).

This sequence belongs to the TRAFAC class translation factor GTPase superfamily. Classic translation factor GTPase family. IF-2 subfamily.

Its subcellular location is the cytoplasm. Functionally, one of the essential components for the initiation of protein synthesis. Protects formylmethionyl-tRNA from spontaneous hydrolysis and promotes its binding to the 30S ribosomal subunits. Also involved in the hydrolysis of GTP during the formation of the 70S ribosomal complex. The chain is Translation initiation factor IF-2 from Clavibacter michiganensis subsp. michiganensis (strain NCPPB 382).